A 236-amino-acid polypeptide reads, in one-letter code: 2,3,4,5-tetrahydropyridine-2,6-dicarboxylate N-acetyltransferase (236 aa).

The protein belongs to the transferase hexapeptide repeat family. DapH subfamily.

The catalysed reaction is (S)-2,3,4,5-tetrahydrodipicolinate + acetyl-CoA + H2O = L-2-acetamido-6-oxoheptanedioate + CoA. The protein operates within amino-acid biosynthesis; L-lysine biosynthesis via DAP pathway; LL-2,6-diaminopimelate from (S)-tetrahydrodipicolinate (acetylase route): step 1/3. Functionally, catalyzes the transfer of an acetyl group from acetyl-CoA to tetrahydrodipicolinate. The sequence is that of 2,3,4,5-tetrahydropyridine-2,6-dicarboxylate N-acetyltransferase from Bacillus pumilus (strain SAFR-032).